The following is a 286-amino-acid chain: ATP synthase gamma chain (286 aa).

This sequence belongs to the ATPase gamma chain family. As to quaternary structure, F-type ATPases have 2 components, CF(1) - the catalytic core - and CF(0) - the membrane proton channel. CF(1) has five subunits: alpha(3), beta(3), gamma(1), delta(1), epsilon(1). CF(0) has three main subunits: a, b and c.

Its subcellular location is the cell inner membrane. Produces ATP from ADP in the presence of a proton gradient across the membrane. The gamma chain is believed to be important in regulating ATPase activity and the flow of protons through the CF(0) complex. The polypeptide is ATP synthase gamma chain (Alteromonas mediterranea (strain DSM 17117 / CIP 110805 / LMG 28347 / Deep ecotype)).